Consider the following 350-residue polypeptide: Heme A synthase (350 aa).

8 helical membrane passes run 16-36 (LARW…VGGI), 77-97 (FQLV…IFFW), 101-121 (HRLL…WFWI), 136-156 (LLAL…SGIV), 170-190 (LLVA…LVAL), 201-221 (GIGL…ALVA), 265-285 (VFLV…VLVV), and 299-321 (IVLH…SGVA). A heme-binding site is contributed by histidine 272. Residue histidine 328 participates in heme binding.

It belongs to the COX15/CtaA family. Type 2 subfamily. Interacts with CtaB. Heme b is required as a cofactor.

The protein localises to the cell membrane. The enzyme catalyses Fe(II)-heme o + 2 A + H2O = Fe(II)-heme a + 2 AH2. Its pathway is porphyrin-containing compound metabolism; heme A biosynthesis; heme A from heme O: step 1/1. Catalyzes the conversion of heme O to heme A by two successive hydroxylations of the methyl group at C8. The first hydroxylation forms heme I, the second hydroxylation results in an unstable dihydroxymethyl group, which spontaneously dehydrates, resulting in the formyl group of heme A. This chain is Heme A synthase, found in Novosphingobium aromaticivorans (strain ATCC 700278 / DSM 12444 / CCUG 56034 / CIP 105152 / NBRC 16084 / F199).